The sequence spans 76 residues: Large ribosomal subunit protein uL29 (76 aa).

The protein belongs to the universal ribosomal protein uL29 family.

The polypeptide is Large ribosomal subunit protein uL29 (Gloeothece citriformis (strain PCC 7424) (Cyanothece sp. (strain PCC 7424))).